The primary structure comprises 218 residues: Glycerol-3-phosphate acyltransferase 2 (218 aa).

The next 5 membrane-spanning stretches (helical) occupy residues Tyr-6–Gly-26, Val-50–Ala-70, Leu-85–Phe-105, Ala-115–Pro-135, and Phe-159–Val-179.

Belongs to the PlsY family. As to quaternary structure, probably interacts with PlsX.

The protein localises to the cell membrane. The catalysed reaction is an acyl phosphate + sn-glycerol 3-phosphate = a 1-acyl-sn-glycero-3-phosphate + phosphate. It functions in the pathway lipid metabolism; phospholipid metabolism. Catalyzes the transfer of an acyl group from acyl-phosphate (acyl-PO(4)) to glycerol-3-phosphate (G3P) to form lysophosphatidic acid (LPA). This enzyme utilizes acyl-phosphate as fatty acyl donor, but not acyl-CoA or acyl-ACP. This Lactobacillus johnsonii (strain CNCM I-12250 / La1 / NCC 533) protein is Glycerol-3-phosphate acyltransferase 2.